A 478-amino-acid polypeptide reads, in one-letter code: Histidine--tRNA ligase (478 aa).

This sequence belongs to the class-II aminoacyl-tRNA synthetase family. As to quaternary structure, homodimer.

Its subcellular location is the cytoplasm. It catalyses the reaction tRNA(His) + L-histidine + ATP = L-histidyl-tRNA(His) + AMP + diphosphate + H(+). The protein is Histidine--tRNA ligase (hisS) of Xanthomonas axonopodis pv. citri (strain 306).